Reading from the N-terminus, the 150-residue chain is 3-hydroxyacyl-[acyl-carrier-protein] dehydratase FabZ (150 aa).

His-54 is an active-site residue.

This sequence belongs to the thioester dehydratase family. FabZ subfamily.

It is found in the cytoplasm. It carries out the reaction a (3R)-hydroxyacyl-[ACP] = a (2E)-enoyl-[ACP] + H2O. Involved in unsaturated fatty acids biosynthesis. Catalyzes the dehydration of short chain beta-hydroxyacyl-ACPs and long chain saturated and unsaturated beta-hydroxyacyl-ACPs. The chain is 3-hydroxyacyl-[acyl-carrier-protein] dehydratase FabZ from Vibrio parahaemolyticus serotype O3:K6 (strain RIMD 2210633).